A 217-amino-acid polypeptide reads, in one-letter code: Somatotropin (217 aa).

The signal sequence occupies residues 1–26 (MAPGSRTSLLLAFGLLCLPWLQEGSA). Position 44 (H44) interacts with Zn(2+). A disulfide bond links C79 and C191. Position 132 is a phosphoserine (S132). E200 lines the Zn(2+) pocket. A disulfide bridge connects residues C208 and C215.

The protein belongs to the somatotropin/prolactin family.

It is found in the secreted. In terms of biological role, plays an important role in growth control. Its major role in stimulating body growth is to stimulate the liver and other tissues to secrete IGF1. It stimulates both the differentiation and proliferation of myoblasts. It also stimulates amino acid uptake and protein synthesis in muscle and other tissues. This Pan troglodytes (Chimpanzee) protein is Somatotropin (GH1).